Consider the following 146-residue polypeptide: Anti-sigma F factor (146 aa).

It belongs to the anti-sigma-factor family.

It carries out the reaction L-seryl-[protein] + ATP = O-phospho-L-seryl-[protein] + ADP + H(+). The enzyme catalyses L-threonyl-[protein] + ATP = O-phospho-L-threonyl-[protein] + ADP + H(+). Binds to sigma F and blocks its ability to form an RNA polymerase holoenzyme (E-sigma F). Phosphorylates SpoIIAA on a serine residue. This phosphorylation may enable SpoIIAA to act as an anti-anti-sigma factor that counteracts SpoIIAB and thus releases sigma F from inhibition. The chain is Anti-sigma F factor from Bacillus cereus (strain ATCC 14579 / DSM 31 / CCUG 7414 / JCM 2152 / NBRC 15305 / NCIMB 9373 / NCTC 2599 / NRRL B-3711).